The sequence spans 327 residues: GMP reductase (327 aa).

The active-site Thioimidate intermediate is the cysteine 176. Residue 205 to 228 (IIADGGIRTHGDIAKSIRFGATMV) participates in NADP(+) binding.

Belongs to the IMPDH/GMPR family. GuaC type 2 subfamily.

The catalysed reaction is IMP + NH4(+) + NADP(+) = GMP + NADPH + 2 H(+). Catalyzes the irreversible NADPH-dependent deamination of GMP to IMP. It functions in the conversion of nucleobase, nucleoside and nucleotide derivatives of G to A nucleotides, and in maintaining the intracellular balance of A and G nucleotides. This chain is GMP reductase, found in Streptococcus equi subsp. zooepidemicus (strain H70).